The chain runs to 243 residues: MMKTLALYGLTLALFFLSGAHSAKITFTNNCPRTIWPGTLTSDQKPQLPNTGFVLASKASLTLGVQAPWKGRFWARTRCTTNSGKFTCETADCSTGQVACNGNGAIPPASLVEINIAANRGMDFYDVSLVDGYNLPVSVATRGGTGDCKATSCRANVNAVCPAELQVKGSDASVLACKSACTAFNQPQYCCTGAFDTARTCPATKYSRIFKQQCPQAYSYAYDDSTSTFTCSGAPDYVITFCP.

The signal sequence occupies residues 1-22; sequence MMKTLALYGLTLALFFLSGAHS. 8 disulfides stabilise this stretch: cysteine 31–cysteine 242, cysteine 79–cysteine 88, cysteine 93–cysteine 100, cysteine 148–cysteine 231, cysteine 153–cysteine 214, cysteine 161–cysteine 177, cysteine 181–cysteine 190, and cysteine 191–cysteine 201.

This sequence belongs to the thaumatin family.

It localises to the secreted. The protein localises to the extracellular space. It is found in the apoplast. In terms of biological role, possesses antifungal activity. The chain is Thaumatin-like protein 1 (TL1) from Castanea sativa (Sweet chestnut).